A 342-amino-acid polypeptide reads, in one-letter code: N-acetyl-gamma-glutamyl-phosphate reductase (342 aa).

The active site involves cysteine 149.

This sequence belongs to the NAGSA dehydrogenase family. Type 1 subfamily.

The protein localises to the cytoplasm. The enzyme catalyses N-acetyl-L-glutamate 5-semialdehyde + phosphate + NADP(+) = N-acetyl-L-glutamyl 5-phosphate + NADPH + H(+). It participates in amino-acid biosynthesis; L-arginine biosynthesis; N(2)-acetyl-L-ornithine from L-glutamate: step 3/4. Its function is as follows. Catalyzes the NADPH-dependent reduction of N-acetyl-5-glutamyl phosphate to yield N-acetyl-L-glutamate 5-semialdehyde. The protein is N-acetyl-gamma-glutamyl-phosphate reductase of Thiobacillus denitrificans (strain ATCC 25259 / T1).